Consider the following 536-residue polypeptide: Quinate permease (536 aa).

Over 1–26 the chain is Cytoplasmic; the sequence is MTLLALKEDRPTPKAVYNWRVYTCAA. The helical transmembrane segment at 27–47 threads the bilayer; sequence IASFASCMIGYDSAFIGTTLA. The Extracellular segment spans residues 48–74; that stretch reads LPSFKKEFDFASYTPGALALLQSNIVS. A helical transmembrane segment spans residues 75 to 95; it reads VYQAGAFFGSLFAFATSYFLG. Residues 96 to 98 lie on the Cytoplasmic side of the membrane; sequence RRK. Residues 99-119 traverse the membrane as a helical segment; that stretch reads SLIAFSVVFIIGAAIMLAADG. The Extracellular segment spans residues 120-131; that stretch reads QGRGIAPIIAGR. The helical transmembrane segment at 132–152 threads the bilayer; that stretch reads VLAGIGVGGASNMVPIYISEL. Over 153–160 the chain is Cytoplasmic; the sequence is APPAVRGR. The chain crosses the membrane as a helical span at residues 161–181; the sequence is LVGIYELGWQIGGLVGFWINY. Residues 182 to 195 lie on the Extracellular side of the membrane; sequence GVNTTMAPTRSQWL. N-linked (GlcNAc...) asparagine glycosylation is present at Asn-184. A helical membrane pass occupies residues 196–216; that stretch reads IPFAVQLIPAGLLFLGSFWIP. At 217-285 the chain is on the cytoplasmic side; that stretch reads ESPRWLFANG…SLKQRKVQWR (69 aa). The helical transmembrane segment at 286 to 306 threads the bilayer; sequence FFLGGMLFLWQNGSGINAINY. Topologically, residues 307 to 327 are extracellular; the sequence is YSPTVFRSIGITGTNTGFLTT. The helical transmembrane segment at 328 to 349 threads the bilayer; it reads GIFGVVKMVLTIVWLLWLVDLV. The Cytoplasmic segment spans residues 350–352; that stretch reads GRR. The helical transmembrane segment at 353–373 threads the bilayer; it reads RMLFIGATGGSLCMWFIGAYI. Over 374–389 the chain is Extracellular; sequence KIAGPGSTKAEDAKLT. The helical transmembrane segment at 390 to 410 threads the bilayer; it reads SGGIAAIFFFYLWTAFYTPSW. The Cytoplasmic segment spans residues 411-435; the sequence is NGTPWVINSEMFDQNTRSLGQASAA. The chain crosses the membrane as a helical span at residues 436–456; sequence ANNWFWNFIISRFTPQMFIKM. The Extracellular segment spans residues 457 to 458; sequence EY. A helical membrane pass occupies residues 459-479; it reads GVYFFFASLMLLSIVFIYFFI. At 480–536 the chain is on the cytoplasmic side; it reads PETKSIPLEAMDRLFEIKPVHNANKILMAELNFDRNPEREESSLDEKDRVTQTENAV. Residues 516–530 are compositionally biased toward basic and acidic residues; that stretch reads PEREESSLDEKDRVT. Positions 516–536 are disordered; the sequence is PEREESSLDEKDRVTQTENAV.

Belongs to the major facilitator superfamily. Sugar transporter (TC 2.A.1.1) family.

It localises to the membrane. The chain is Quinate permease (qa-y) from Neurospora terricola.